The chain runs to 367 residues: Coiled-coil domain-containing protein 34 (367 aa).

A Phosphoserine modification is found at Ser55. Disordered regions lie at residues 77–105 (FPFG…KVES), 191–228 (QKKN…KAKE), and 310–349 (YNPI…SSLA). Acidic residues predominate over residues 82–97 (DDSEGEDEEALDEDAR). Coiled-coil stretches lie at residues 87 to 108 (EDEE…SLEG) and 153 to 280 (RLQQ…AKNK). Over residues 197–228 (ERKEREQKINKEMEEKEAKKREKEHLQEKAKE) the composition is skewed to basic and acidic residues. Residues 339–349 (ASQPLPSSSLA) are compositionally biased toward low complexity.

Expressed in testis and sperm.

The protein resides in the cell projection. The protein localises to the cilium. It is found in the flagellum. Its function is as follows. Involved in spermatogenesis. Has a probable role in anterograde intraflagellar transport which is essential for the formation of sperm flagella. This chain is Coiled-coil domain-containing protein 34 (Ccdc34), found in Mus musculus (Mouse).